We begin with the raw amino-acid sequence, 712 residues long: Follistatin-like domain-containing protein DDB_G0289517 (712 aa).

A signal peptide spans 1–21 (MKIQTIIQIVLISFLFLNVES). A glycan (N-linked (GlcNAc...) asparagine) is linked at asparagine 102. Positions 181–400 (DIYNHLNPDS…SSSPVHQDPC (220 aa)) are disordered. A compositionally biased stretch (basic and acidic residues) spans 192-203 (QFKDKPNHENHK). A compositionally biased stretch (basic residues) spans 204 to 214 (KDKNNKKHKKD). Residues asparagine 217 and asparagine 234 are each glycosylated (N-linked (GlcNAc...) asparagine). Residues 220–251 (DKNNNNNNNNNNKKNKTINNNEPNQNQQSNPI) show a composition bias toward low complexity. The span at 254 to 269 (TFNNETPFPWNFKNQD) shows a compositional bias: polar residues. Over residues 270–281 (QQQQKQEQTQKQ) the composition is skewed to low complexity. Polar residues predominate over residues 301–321 (KEPTTHLNTIEPTSFTASASR). The span at 330-339 (KDEENIDENN) shows a compositional bias: acidic residues. Positions 352–364 (DDKSKKPKDDEKH) are enriched in basic and acidic residues. Residue asparagine 369 is glycosylated (N-linked (GlcNAc...) asparagine). Over residues 374-384 (PADDPSIEITE) the composition is skewed to acidic residues. A compositionally biased stretch (polar residues) spans 386-395 (PTITPSSSPV). 2 consecutive Follistatin-like domains span residues 399–421 (PCKKATCPNGSHCLVYGNQAYCK) and 471–494 (TCSTIKCEDDEVCINKVGLNPYCQ). N-linked (GlcNAc...) asparagine glycosylation is present at asparagine 407. N-linked (GlcNAc...) asparagine glycans are attached at residues asparagine 505, asparagine 524, and asparagine 566. The Follistatin-like 3 domain maps to 596–618 (SCETLLCEGVNSYCVENGGPICK). N-linked (GlcNAc...) asparagine glycosylation occurs at asparagine 622. Follistatin-like domains lie at 660 to 682 (SCSVIQCPDNQYCVNTDKGPKCY) and 687 to 710 (ECSNSRCPRDYTCKRDEIRGGACL).

It is found in the secreted. This Dictyostelium discoideum (Social amoeba) protein is Follistatin-like domain-containing protein DDB_G0289517.